The primary structure comprises 285 residues: MIRAKKHFGQNFLQDEAVLNKIIQAIPKDTQNIVEIGPGLGDLTFKILQICSVTAYEIDSELFALLGKKFAKEVQNGRLKLFCKDALEKWDEGGVSEQGYFLVANLPYYVATKMILSAIDDEKCRGLVVMIQREVALKFSAKSGESEFSSLAILANLQGSCELLFDVSAQCFNPPPKVVSSVIKIQKSKILLGESGIFKDKFEYEKFKIFLKIAFASPRKTLMKNLSAKFDKFELNTLFAELNLSPAIRPHELNVELYLKIFENLKEDNERQKRRKSGSLAGQEQ.

Residues Asn-11, Leu-13, Gly-37, Glu-57, Asp-85, and Asn-105 each coordinate S-adenosyl-L-methionine.

Belongs to the class I-like SAM-binding methyltransferase superfamily. rRNA adenine N(6)-methyltransferase family. RsmA subfamily.

Its subcellular location is the cytoplasm. The catalysed reaction is adenosine(1518)/adenosine(1519) in 16S rRNA + 4 S-adenosyl-L-methionine = N(6)-dimethyladenosine(1518)/N(6)-dimethyladenosine(1519) in 16S rRNA + 4 S-adenosyl-L-homocysteine + 4 H(+). Functionally, specifically dimethylates two adjacent adenosines (A1518 and A1519) in the loop of a conserved hairpin near the 3'-end of 16S rRNA in the 30S particle. May play a critical role in biogenesis of 30S subunits. This Campylobacter curvus (strain 525.92) protein is Ribosomal RNA small subunit methyltransferase A.